The primary structure comprises 444 residues: tRNA-2-methylthio-N(6)-dimethylallyladenosine synthase (444 aa).

One can recognise an MTTase N-terminal domain in the interval 4–120 (PTYYTITFGC…LGDLLAQVEA (117 aa)). [4Fe-4S] cluster contacts are provided by Cys13, Cys49, Cys83, Cys155, Cys159, and Cys162. The Radical SAM core domain occupies 141–372 (RDSQVTAWIN…RLVAEVAAAR (232 aa)). A TRAM domain is found at 374–438 (ARLLGQVQEV…AFSLTGEAVT (65 aa)).

Belongs to the methylthiotransferase family. MiaB subfamily. As to quaternary structure, monomer. [4Fe-4S] cluster serves as cofactor.

It is found in the cytoplasm. The enzyme catalyses N(6)-dimethylallyladenosine(37) in tRNA + (sulfur carrier)-SH + AH2 + 2 S-adenosyl-L-methionine = 2-methylsulfanyl-N(6)-dimethylallyladenosine(37) in tRNA + (sulfur carrier)-H + 5'-deoxyadenosine + L-methionine + A + S-adenosyl-L-homocysteine + 2 H(+). Catalyzes the methylthiolation of N6-(dimethylallyl)adenosine (i(6)A), leading to the formation of 2-methylthio-N6-(dimethylallyl)adenosine (ms(2)i(6)A) at position 37 in tRNAs that read codons beginning with uridine. The polypeptide is tRNA-2-methylthio-N(6)-dimethylallyladenosine synthase (Synechococcus sp. (strain JA-2-3B'a(2-13)) (Cyanobacteria bacterium Yellowstone B-Prime)).